A 210-amino-acid polypeptide reads, in one-letter code: Peptidyl-tRNA hydrolase (210 aa).

Tyrosine 14 is a tRNA binding site. Histidine 19 serves as the catalytic Proton acceptor. TRNA is bound by residues phenylalanine 64, asparagine 66, and asparagine 112.

This sequence belongs to the PTH family. As to quaternary structure, monomer.

Its subcellular location is the cytoplasm. The catalysed reaction is an N-acyl-L-alpha-aminoacyl-tRNA + H2O = an N-acyl-L-amino acid + a tRNA + H(+). Its function is as follows. Hydrolyzes ribosome-free peptidyl-tRNAs (with 1 or more amino acids incorporated), which drop off the ribosome during protein synthesis, or as a result of ribosome stalling. Catalyzes the release of premature peptidyl moieties from peptidyl-tRNA molecules trapped in stalled 50S ribosomal subunits, and thus maintains levels of free tRNAs and 50S ribosomes. The protein is Peptidyl-tRNA hydrolase of Methylorubrum populi (strain ATCC BAA-705 / NCIMB 13946 / BJ001) (Methylobacterium populi).